A 37-amino-acid chain; its full sequence is Large ribosomal subunit protein bL36 (37 aa).

This sequence belongs to the bacterial ribosomal protein bL36 family.

This is Large ribosomal subunit protein bL36 from Bacillus anthracis (strain A0248).